The chain runs to 390 residues: Chorismate synthase 1 (390 aa).

NADP(+) contacts are provided by arginine 39 and arginine 45. The segment at 95–117 (EQEEKEMKRKVTKPRPGHADLNG) is disordered. FMN is bound by residues 132–134 (RSS), 253–254 (NA), glycine 298, 313–317 (KPIPT), and arginine 339.

This sequence belongs to the chorismate synthase family. As to quaternary structure, homotetramer. FMNH2 is required as a cofactor.

The enzyme catalyses 5-O-(1-carboxyvinyl)-3-phosphoshikimate = chorismate + phosphate. It functions in the pathway metabolic intermediate biosynthesis; chorismate biosynthesis; chorismate from D-erythrose 4-phosphate and phosphoenolpyruvate: step 7/7. Its function is as follows. Catalyzes the anti-1,4-elimination of the C-3 phosphate and the C-6 proR hydrogen from 5-enolpyruvylshikimate-3-phosphate (EPSP) to yield chorismate, which is the branch point compound that serves as the starting substrate for the three terminal pathways of aromatic amino acid biosynthesis. This reaction introduces a second double bond into the aromatic ring system. This Bacillus cereus (strain ATCC 10987 / NRS 248) protein is Chorismate synthase 1.